The sequence spans 308 residues: ADP-L-glycero-D-manno-heptose-6-epimerase (308 aa).

Residues 10 to 11 (FI), 31 to 32 (DN), lysine 38, lysine 53, 75 to 79 (EGACS), and asparagine 92 contribute to the NADP(+) site. The active-site Proton acceptor is tyrosine 139. NADP(+) is bound at residue lysine 143. Residue asparagine 168 participates in substrate binding. NADP(+) contacts are provided by valine 169 and lysine 177. Catalysis depends on lysine 177, which acts as the Proton acceptor. Substrate-binding positions include serine 179, histidine 186, 200-203 (FAGS), arginine 208, and tyrosine 271.

The protein belongs to the NAD(P)-dependent epimerase/dehydratase family. HldD subfamily. As to quaternary structure, homopentamer. It depends on NADP(+) as a cofactor.

The enzyme catalyses ADP-D-glycero-beta-D-manno-heptose = ADP-L-glycero-beta-D-manno-heptose. It participates in nucleotide-sugar biosynthesis; ADP-L-glycero-beta-D-manno-heptose biosynthesis; ADP-L-glycero-beta-D-manno-heptose from D-glycero-beta-D-manno-heptose 7-phosphate: step 4/4. In terms of biological role, catalyzes the interconversion between ADP-D-glycero-beta-D-manno-heptose and ADP-L-glycero-beta-D-manno-heptose via an epimerization at carbon 6 of the heptose. In Actinobacillus succinogenes (strain ATCC 55618 / DSM 22257 / CCUG 43843 / 130Z), this protein is ADP-L-glycero-D-manno-heptose-6-epimerase.